The chain runs to 428 residues: E3 ubiquitin-protein ligase RNF128 (428 aa).

Residues 1–38 (MGPPLGAGVSCRGGCGSSRLLAWCFLLALSPQAPGSRG) form the signal peptide. Asn48, Asn59, and Asn101 each carry an N-linked (GlcNAc...) asparagine glycan. Positions 75–183 (SPLEPVAGVL…LKGTKILQSI (109 aa)) constitute a PA domain. A helical membrane pass occupies residues 208 to 228 (IFFVSVSFFIITAATVGYFIF). The segment at 277-318 (CAVCIELYKPNDLVRILTCNHIFHKTCVDPWLLEHRTCPMCK) adopts an RING-type; atypical zinc-finger fold. Residues 346-428 (ISNSASSHEE…QETAVREIKS (83 aa)) are disordered. The span at 416–428 (TPHQETAVREIKS) shows a compositional bias: basic and acidic residues.

Auto-ubiquitinated. Controls the development of T-cell clonal anergy by ubiquitination.

The protein localises to the cytoplasm. The protein resides in the endomembrane system. It is found in the cytoskeleton. Its subcellular location is the perinuclear region. The enzyme catalyses S-ubiquitinyl-[E2 ubiquitin-conjugating enzyme]-L-cysteine + [acceptor protein]-L-lysine = [E2 ubiquitin-conjugating enzyme]-L-cysteine + N(6)-ubiquitinyl-[acceptor protein]-L-lysine.. The protein operates within protein modification; protein ubiquitination. In terms of biological role, E3 ubiquitin-protein ligase that catalyzes 'Lys-27', 'Lys-48'- or 'Lys-63'-linked polyubiquitin chains formation and plays a role in different biological processes such as modulation of immune response, cytoskeletal dynamics or protein homeostasis. Inhibits IL2 and IL4 transcription, thereby playing an important role in the induction of the anergic phenotype, a long-term stable state of T-lymphocyte unresponsiveness to antigenic stimulation associated with the blockade of interleukin production. Ubiquitinates ARPC5 with 'Lys-48' linkages and COR1A with 'Lys-63' linkages leading to their degradation, down-regulation of these cytoskeletal components results in impaired lamellipodium formation and reduced accumulation of F-actin at the immunological synapse. Functions in the patterning of the dorsal ectoderm; sensitizes ectoderm to respond to neural-inducing signals. Plays a positive role in innate immune response by promoting 'Lys-63'-linked ubiquitination of TBK1 after RNA- or DNA-virus infection. Regulates alveolar macrophage activation and neutrophil infiltration by interacting with TLR4, targeting it for degradation, and inhibiting NF-kappa-B activation, hence decreasing pro-inflammatory cytokines. Negatively regulates the IL-3/STAT5 signaling pathway by facilitating 'Lys-27'-linked polyubiquitination of IL3RA leading to its degradation via lysosomal pathway. Directly regulates the N-glycosylation process in the endoplasmic reticulum by targeting the glycosyl-transferase RPN1 for ubiquitination and degradation. Other substrates targeted for degradation by RNF128 include transmembrane proteins CD40L, CD83 or the tetraspanin CD151. The sequence is that of E3 ubiquitin-protein ligase RNF128 (RNF128) from Pongo abelii (Sumatran orangutan).